Reading from the N-terminus, the 273-residue chain is Dermonecrotic toxin LafSicTox-betaIE1 (273 aa).

Histidine 5 is a catalytic residue. Positions 25 and 27 each coordinate Mg(2+). Histidine 41 serves as the catalytic Nucleophile. Disulfide bonds link cysteine 45–cysteine 51 and cysteine 47–cysteine 189. Residue aspartate 85 coordinates Mg(2+). Asparagine 250 carries an N-linked (GlcNAc...) asparagine glycan.

The protein belongs to the arthropod phospholipase D family. Class II subfamily. Requires Mg(2+) as cofactor. In terms of tissue distribution, expressed by the venom gland.

Its subcellular location is the secreted. It carries out the reaction an N-(acyl)-sphingosylphosphocholine = an N-(acyl)-sphingosyl-1,3-cyclic phosphate + choline. The enzyme catalyses an N-(acyl)-sphingosylphosphoethanolamine = an N-(acyl)-sphingosyl-1,3-cyclic phosphate + ethanolamine. The catalysed reaction is a 1-acyl-sn-glycero-3-phosphocholine = a 1-acyl-sn-glycero-2,3-cyclic phosphate + choline. It catalyses the reaction a 1-acyl-sn-glycero-3-phosphoethanolamine = a 1-acyl-sn-glycero-2,3-cyclic phosphate + ethanolamine. Dermonecrotic toxins cleave the phosphodiester linkage between the phosphate and headgroup of certain phospholipids (sphingolipid and lysolipid substrates), forming an alcohol (often choline) and a cyclic phosphate. This toxin acts on sphingomyelin (SM). It may also act on ceramide phosphoethanolamine (CPE), lysophosphatidylcholine (LPC) and lysophosphatidylethanolamine (LPE), but not on lysophosphatidylserine (LPS), and lysophosphatidylglycerol (LPG). It acts by transphosphatidylation, releasing exclusively cyclic phosphate products as second products. Induces dermonecrosis, hemolysis, increased vascular permeability, edema, inflammatory response, and platelet aggregation. This Loxosceles aff. spinulosa (strain GJB-2008) (Recluse spider) protein is Dermonecrotic toxin LafSicTox-betaIE1.